Consider the following 119-residue polypeptide: Large ribosomal subunit protein bL19 (119 aa).

The protein belongs to the bacterial ribosomal protein bL19 family.

In terms of biological role, this protein is located at the 30S-50S ribosomal subunit interface and may play a role in the structure and function of the aminoacyl-tRNA binding site. This Photobacterium profundum (strain SS9) protein is Large ribosomal subunit protein bL19.